The chain runs to 28 residues: Cliotide T21 (28 aa).

The segment at residues 1-28 (DLQCAETCVHSPCIGPCYCKHGLICYRN) is a cross-link (cyclopeptide (Asp-Asn)). Disulfide bonds link Cys-4–Cys-17, Cys-8–Cys-19, and Cys-13–Cys-25.

In terms of processing, contains 3 disulfide bonds. This is a cyclic peptide. As to expression, expressed in root nodules but not in seed.

Probably participates in a plant defense mechanism. Not active against Gram-negative bacterium E.coli ATCC 700926 or Gram-positive bacterium S.aureus ATCC 12600 up to a concentration of 100 uM under low-salt conditions. The sequence is that of Cliotide T21 from Clitoria ternatea (Butterfly pea).